The following is a 310-amino-acid chain: Olfactory receptor 5P80 (310 aa).

The Extracellular segment spans residues 1-25 (MEPGNYTVVTEVILLGFTEDAIIRA). Asn-5 carries N-linked (GlcNAc...) asparagine glycosylation. Residues 26 to 46 (ILFIVFLIIYSVTLMGNASII) form a helical membrane-spanning segment. At 47-54 (MLIRRSPQ) the chain is on the cytoplasmic side. A helical transmembrane segment spans residues 55 to 75 (LHTPMYLLLSHLAFVDIGYSS). Over 76–99 (SVTPIMLKGFLRKETFILVSGCVA) the chain is Extracellular. A disulfide bond links Cys-97 and Cys-189. The helical transmembrane segment at 100–120 (QLCSVVTFGSTECFLLAAMAY) threads the bilayer. Residues 121-133 (DRYVAICSPLLYA) lie on the Cytoplasmic side of the membrane. The chain crosses the membrane as a helical span at residues 134 to 154 (TQMSSTVCILLVGASYLGGCV). Over 155 to 196 (NAWTFTGCLLNLSFCRPNKVNHFFCDYSPLLKISCSHDFSSE) the chain is Extracellular. Asn-165 is a glycosylation site (N-linked (GlcNAc...) asparagine). A helical membrane pass occupies residues 197–217 (VIPAISSGSIIVVTVFIIALS). Topologically, residues 218–237 (YVYILVSILKMRSTEGRQKA) are cytoplasmic. A helical transmembrane segment spans residues 238–258 (FSTCTSHLTAVTLFYGTITFI). Over 259-271 (YVMPKSSYSTDQN) the chain is Extracellular. Residues 272–292 (KVVSVFYTVVIPMLNPIIYSL) form a helical membrane-spanning segment. The Cytoplasmic portion of the chain corresponds to 293 to 310 (RNKDVKEAMKKLMANTHH).

The protein belongs to the G-protein coupled receptor 1 family.

It localises to the cell membrane. Its function is as follows. Potential odorant receptor. The chain is Olfactory receptor 5P80 from Mus musculus (Mouse).